A 781-amino-acid polypeptide reads, in one-letter code: Molybdenum cofactor sulfurase (781 aa).

K246 carries the post-translational modification N6-(pyridoxal phosphate)lysine. Residue C413 is part of the active site. In terms of domain architecture, MOSC spans 619 to 781 (GDAVAQWLSE…MTCGDVVIVE (163 aa)). Phosphoserine is present on S734.

This sequence belongs to the class-V pyridoxal-phosphate-dependent aminotransferase family. MOCOS subfamily. Pyridoxal 5'-phosphate serves as cofactor.

It carries out the reaction Mo-molybdopterin + L-cysteine + AH2 = thio-Mo-molybdopterin + L-alanine + A + H2O. The protein operates within cofactor biosynthesis; molybdopterin biosynthesis. Functionally, sulfurates the molybdenum cofactor. Sulfation of molybdenum is essential for xanthine dehydrogenase (XDH) and aldehyde oxidase (ADO) enzymes in which molybdenum cofactor is liganded by 1 oxygen and 1 sulfur atom in active form. The chain is Molybdenum cofactor sulfurase from Drosophila erecta (Fruit fly).